The chain runs to 295 residues: CRISPR-associated endonuclease Cas1 2 (295 aa).

Mn(2+)-binding residues include E155, H215, and E230.

This sequence belongs to the CRISPR-associated endonuclease Cas1 family. In terms of assembly, homodimer, forms a heterotetramer with a Cas2 homodimer. Mg(2+) is required as a cofactor. It depends on Mn(2+) as a cofactor.

CRISPR (clustered regularly interspaced short palindromic repeat), is an adaptive immune system that provides protection against mobile genetic elements (viruses, transposable elements and conjugative plasmids). CRISPR clusters contain spacers, sequences complementary to antecedent mobile elements, and target invading nucleic acids. CRISPR clusters are transcribed and processed into CRISPR RNA (crRNA). Acts as a dsDNA endonuclease. Involved in the integration of spacer DNA into the CRISPR cassette. This chain is CRISPR-associated endonuclease Cas1 2, found in Pyrobaculum aerophilum (strain ATCC 51768 / DSM 7523 / JCM 9630 / CIP 104966 / NBRC 100827 / IM2).